Reading from the N-terminus, the 102-residue chain is Small ribosomal subunit protein uS10 (102 aa).

Belongs to the universal ribosomal protein uS10 family. As to quaternary structure, part of the 30S ribosomal subunit.

Its function is as follows. Involved in the binding of tRNA to the ribosomes. This chain is Small ribosomal subunit protein uS10, found in Limosilactobacillus reuteri (strain DSM 20016) (Lactobacillus reuteri).